Here is a 125-residue protein sequence, read N- to C-terminus: Small ribosomal subunit protein uS13 (125 aa).

A disordered region spans residues 95-125 (GLPVRGQRTKNNCRTRKGKRKTVANKKKATK).

This sequence belongs to the universal ribosomal protein uS13 family. Part of the 30S ribosomal subunit. Forms a loose heterodimer with protein S19. Forms two bridges to the 50S subunit in the 70S ribosome.

Its function is as follows. Located at the top of the head of the 30S subunit, it contacts several helices of the 16S rRNA. In the 70S ribosome it contacts the 23S rRNA (bridge B1a) and protein L5 of the 50S subunit (bridge B1b), connecting the 2 subunits; these bridges are implicated in subunit movement. Contacts the tRNAs in the A and P-sites. This chain is Small ribosomal subunit protein uS13, found in Cytophaga hutchinsonii (strain ATCC 33406 / DSM 1761 / CIP 103989 / NBRC 15051 / NCIMB 9469 / D465).